A 419-amino-acid chain; its full sequence is L-rhamnose isomerase (419 aa).

Mn(2+) is bound by residues H262, D294, and D296.

Belongs to the rhamnose isomerase family. Homotetramer. The cofactor is Mn(2+).

It localises to the cytoplasm. The enzyme catalyses L-rhamnopyranose = L-rhamnulose. It functions in the pathway carbohydrate degradation; L-rhamnose degradation; glycerone phosphate from L-rhamnose: step 1/3. Functionally, catalyzes the interconversion of L-rhamnose and L-rhamnulose. In Salmonella choleraesuis (strain SC-B67), this protein is L-rhamnose isomerase.